The sequence spans 566 residues: MSASTGGGGGGDSGSSSSSSSQASCGPEPSGSELAPPTPAPRMLQGLLGSDDEEQEDPKDYCKGGYYPVKIGDLFNGRYHVVRKLGWGHFSTVWLCWDIQRKRFVALKVVKSAGHYTETAVDEIKLLKCVRDSDPSDPKRETIVQLIDDFRISGVNGVHVCMVLEVLGHQLLKWIIKSNYQGLPVPCVKSIVRQVLHGLDYLHTKCKIIHTDIKPENILLCVGDAYIRRLAAEATEWQQSGAPPPSRSTVSTAPQEVLSGKLSKNKRKKMRRKRKQQKRLLEERLRDLQRLEAMEAAAQAEDSGSRLEGGSGSTSSSGCHPGGAGPGPSPASSSPAPGGDRSLSPGSQTSGFSGSLFSPASCSILSGSSNQRETGGLLSPSTPFGASNLLVNPLEPQNADKIRIKIADLGNACWVHKHFTEGIQTRQYRAVEVLIGAEYGPPADIWSTACMAFELATGDYLFEPHSGEDYSRDEDHIAHIVELLGDIPPAFALSGRYSREFFNRRGELRHIHNLKHWGLYEVLMEKYEWPLEQATQFSAFLLPMMEYIPEKRASAADCLQHPWLNP.

A compositionally biased stretch (gly residues) spans 1 to 13 (MSASTGGGGGGDS). The interval 1–60 (MSASTGGGGGGDSGSSSSSSSQASCGPEPSGSELAPPTPAPRMLQGLLGSDDEEQEDPKD) is disordered. Over residues 14–26 (GSSSSSSSQASCG) the composition is skewed to low complexity. A Phosphoserine modification is found at serine 50. A Protein kinase domain is found at 79 to 564 (YHVVRKLGWG…AADCLQHPWL (486 aa)). ATP is bound by residues 85–93 (LGWGHFSTV) and lysine 108. Aspartate 212 acts as the Proton acceptor in catalysis. A compositionally biased stretch (polar residues) spans 236–254 (EWQQSGAPPPSRSTVSTAP). Disordered regions lie at residues 236 to 283 (EWQQ…LLEE) and 295 to 353 (EAAA…SGFS). The segment covering 263–278 (SKNKRKKMRRKRKQQK) has biased composition (basic residues). Position 329 is a phosphoserine (serine 329). Low complexity predominate over residues 330 to 339 (PASSSPAPGG). Residues 344–353 (SPGSQTSGFS) are compositionally biased toward polar residues.

It belongs to the protein kinase superfamily. As to expression, highly expressed in skeletal muscle, heart, uterus and parorchis. Weakly expressed in brain, stomach, small intestine and ovary.

Its subcellular location is the nucleus. The protein localises to the cytoplasm. It carries out the reaction L-seryl-[protein] + ATP = O-phospho-L-seryl-[protein] + ADP + H(+). The catalysed reaction is L-threonyl-[protein] + ATP = O-phospho-L-threonyl-[protein] + ADP + H(+). Serine/arginine-rich protein-specific kinase which specifically phosphorylates its substrates at serine residues located in regions rich in arginine/serine dipeptides, known as RS domains. Phosphorylates the SR splicing factor SRSF1 and the lamin-B receptor (LBR) in vitro. Required for normal muscle development. The sequence is that of SRSF protein kinase 3 (SRPK3) from Sus scrofa (Pig).